Consider the following 568-residue polypeptide: AP2-like ethylene-responsive transcription factor PLT2 (568 aa).

Residues 151–171 (ASPAETSADNSSSTTNTSGGA) show a composition bias toward low complexity. The tract at residues 151–173 (ASPAETSADNSSSTTNTSGGAIV) is disordered. 2 consecutive DNA-binding regions (AP2/ERF) follow at residues 190 to 256 (IYRG…TNFP) and 292 to 350 (MYRG…TNFE). The segment at 548-568 (WNSGESAQGSNPGGVFTMWNE) is disordered.

It belongs to the AP2/ERF transcription factor family. AP2 subfamily. Post-translationally, stabilized in root meristems by reactive oxygen species (ROS) mediated oxidative post-translational modification triggered by RGF1 hormone peptide in a RITF1-dependent manner. As to expression, expressed in roots, seedlings, flowers, and siliques. Also detected at low levels in leaves. In roots, specifically detected in the distal root meristem, including the QC. This tissue specificity is regulated by auxin gradient and depends on PIN proteins.

Its subcellular location is the nucleus. Its function is as follows. Probably acts as a transcriptional activator. Binds to the GCC-box pathogenesis-related promoter element. May be involved in the regulation of gene expression by stress factors and by components of stress signal transduction pathways. Master regulator of basal/root fate. Essential for root quiescent center (QC) and columella specification, stem cell activity, as well as for establishment of the stem cell niche during embryogenesis. Modulates the root polar auxin transport by regulating the distribution of PIN genes. Essential role in respecifying pattern and polarity in damaged roots. Direct target of the transcriptional corepressor TPL. Expression levels and patterns regulated post-transcriptionally by root meristem growth factors (RGFs). The sequence is that of AP2-like ethylene-responsive transcription factor PLT2 from Arabidopsis thaliana (Mouse-ear cress).